Reading from the N-terminus, the 180-residue chain is ATP-dependent protease subunit HslV (180 aa).

The active site involves Thr-5. Residues Gly-161, Cys-164, and Thr-167 each coordinate Na(+).

It belongs to the peptidase T1B family. HslV subfamily. As to quaternary structure, a double ring-shaped homohexamer of HslV is capped on each side by a ring-shaped HslU homohexamer. The assembly of the HslU/HslV complex is dependent on binding of ATP.

The protein localises to the cytoplasm. It catalyses the reaction ATP-dependent cleavage of peptide bonds with broad specificity.. Its activity is regulated as follows. Allosterically activated by HslU binding. Functionally, protease subunit of a proteasome-like degradation complex believed to be a general protein degrading machinery. This is ATP-dependent protease subunit HslV from Campylobacter curvus (strain 525.92).